Here is a 660-residue protein sequence, read N- to C-terminus: Poly [ADP-ribose] polymerase 2-A (660 aa).

One can recognise an SAP 1 domain in the interval 2 to 36 (SARLRVEELRAELQRRGLDASGNKPVLVRRLDAAI). Positions 40–92 (EEEEAAVSAAAKEEADAGGVVDGEGNGEDKRKRKRRGDGEDVDNSESDAAKLE) are disordered. A Nuclear localization signal motif is present at residues 69-75 (KRKRKRR). An SAP 2 domain is found at 91–125 (LEGMSYRELQALAKSRGLAANGSKKEVIERLLCAP). A WGR domain is found at 179–281 (TYHVLQVWFL…KSFECYARKY (103 aa)). In terms of domain architecture, PARP alpha-helical spans 308 to 426 (ETKLETRIAS…EIEIATKLLE (119 aa)). The PARP catalytic domain maps to 434–660 (DPLYARYKQL…LHVSFNFKKR (227 aa)).

The protein belongs to the ARTD/PARP family.

Its subcellular location is the nucleus. It catalyses the reaction NAD(+) + (ADP-D-ribosyl)n-acceptor = nicotinamide + (ADP-D-ribosyl)n+1-acceptor + H(+).. It carries out the reaction L-aspartyl-[protein] + NAD(+) = 4-O-(ADP-D-ribosyl)-L-aspartyl-[protein] + nicotinamide. The enzyme catalyses L-glutamyl-[protein] + NAD(+) = 5-O-(ADP-D-ribosyl)-L-glutamyl-[protein] + nicotinamide. Its function is as follows. Involved in the base excision repair (BER) pathway, by catalyzing the poly(ADP-ribosyl)ation of a limited number of acceptor proteins involved in chromatin architecture and in DNA metabolism. This modification follows DNA damages and appears as an obligatory step in a detection/signaling pathway leading to the reparation of DNA strand breaks. In Oryza sativa subsp. japonica (Rice), this protein is Poly [ADP-ribose] polymerase 2-A (PARP2-A).